We begin with the raw amino-acid sequence, 145 residues long: D-aminoacyl-tRNA deacylase (145 aa).

Residues 137 to 138 (GP) carry the Gly-cisPro motif, important for rejection of L-amino acids motif.

The protein belongs to the DTD family. In terms of assembly, homodimer.

It is found in the cytoplasm. The enzyme catalyses glycyl-tRNA(Ala) + H2O = tRNA(Ala) + glycine + H(+). It catalyses the reaction a D-aminoacyl-tRNA + H2O = a tRNA + a D-alpha-amino acid + H(+). In terms of biological role, an aminoacyl-tRNA editing enzyme that deacylates mischarged D-aminoacyl-tRNAs. Also deacylates mischarged glycyl-tRNA(Ala), protecting cells against glycine mischarging by AlaRS. Acts via tRNA-based rather than protein-based catalysis; rejects L-amino acids rather than detecting D-amino acids in the active site. By recycling D-aminoacyl-tRNA to D-amino acids and free tRNA molecules, this enzyme counteracts the toxicity associated with the formation of D-aminoacyl-tRNA entities in vivo and helps enforce protein L-homochirality. The chain is D-aminoacyl-tRNA deacylase from Pectobacterium carotovorum subsp. carotovorum (strain PC1).